The chain runs to 85 residues: Putative membrane protein insertion efficiency factor (85 aa).

This sequence belongs to the UPF0161 family.

The protein resides in the cell membrane. Its function is as follows. Could be involved in insertion of integral membrane proteins into the membrane. In Baumannia cicadellinicola subsp. Homalodisca coagulata, this protein is Putative membrane protein insertion efficiency factor.